The primary structure comprises 433 residues: Evolutionarily conserved signaling intermediate in Toll pathway, mitochondrial (433 aa).

Residues 1 to 48 constitute a mitochondrion transit peptide; sequence MSWAQAILLARGASRGWGGICSTALTGAPFSQVPPQAPRGLRCSAAAH. The disordered stretch occupies residues 36-63; it reads QAPRGLRCSAAAHNPDSSLVPHPPEPPR. Lys-372 participates in a covalent cross-link: Glycyl lysine isopeptide (Lys-Gly) (interchain with G-Cter in ubiquitin). The segment at 397–433 is disordered; that stretch reads SGELLPSSSELEEPPPPPPEGQEEEEDSQQRQQQGQS.

Belongs to the ECSIT family. As to quaternary structure, interacts with MAP3K1, SMAD4 and TRAF6. Interacts with SMAD1 only after BMP4-treatment. Part of the mitochondrial complex I assembly/MCIA complex that comprises at least the core subunits TMEM126B, NDUFAF1, ECSIT and ACAD9 and complement subunits such as COA1 and TMEM186. Interacts with NDUFAF1. Interacts with ACAD9. Interacts with TRIM59. Interacts with TMEM70 and TMEM242. Interacts (when ubiquitinated) with NF-kappa-B subunits RELA and NFKB1. Interacts with RIGI, IFIT1 and MAVS; these interactions promote RLR-mediated type I IFN induction. Interacts with SQSTM1; this interaction inhibits TLR4 signaling via functional regulation of the TRAF6-ECSIT complex. Interacts with cereblon/CRBN; this interaction inhibits the ubiquitination of ECSIT. In terms of processing, ubiquitinated on Lys-372; leading to translocation in the nucleus together with RELA and NFKB1 and expression of NF-kappa-B-dependent genes.

The protein resides in the cytoplasm. It localises to the nucleus. The protein localises to the mitochondrion. In terms of biological role, adapter protein that plays a role in different signaling pathways including TLRs and IL-1 pathways or innate antiviral induction signaling. Plays a role in the activation of NF-kappa-B by forming a signal complex with TRAF6 and TAK1/MAP3K7 to activate TAK1/MAP3K7 leading to activation of IKKs. Once ubiquitinated, interacts with the dissociated RELA and NFKB1 proteins and translocates to the nucleus where it induces NF-kappa-B-dependent gene expression. Plays a role in innate antiviral immune response by bridging the pattern recognition receptors RIGI and MDA5/IFIT1 to the MAVS complex at the mitochondrion. Promotes proteolytic activation of MAP3K1. Involved in the BMP signaling pathway. Required for normal embryonic development. Functionally, as part of the MCIA complex, involved in the assembly of the mitochondrial complex I. In Bos taurus (Bovine), this protein is Evolutionarily conserved signaling intermediate in Toll pathway, mitochondrial.